Reading from the N-terminus, the 322-residue chain is Phosphatidylserine decarboxylase proenzyme (322 aa).

Residues aspartate 90, histidine 147, and serine 254 each act as charge relay system; for autoendoproteolytic cleavage activity in the active site. The Schiff-base intermediate with substrate; via pyruvic acid; for decarboxylase activity role is filled by serine 254. The residue at position 254 (serine 254) is a Pyruvic acid (Ser); by autocatalysis. Residues proline 293–valine 322 form a disordered region. Positions glutamate 308–valine 322 are enriched in basic and acidic residues.

The protein belongs to the phosphatidylserine decarboxylase family. PSD-B subfamily. Prokaryotic type I sub-subfamily. Heterodimer of a large membrane-associated beta subunit and a small pyruvoyl-containing alpha subunit. Requires pyruvate as cofactor. In terms of processing, is synthesized initially as an inactive proenzyme. Formation of the active enzyme involves a self-maturation process in which the active site pyruvoyl group is generated from an internal serine residue via an autocatalytic post-translational modification. Two non-identical subunits are generated from the proenzyme in this reaction, and the pyruvate is formed at the N-terminus of the alpha chain, which is derived from the carboxyl end of the proenzyme. The autoendoproteolytic cleavage occurs by a canonical serine protease mechanism, in which the side chain hydroxyl group of the serine supplies its oxygen atom to form the C-terminus of the beta chain, while the remainder of the serine residue undergoes an oxidative deamination to produce ammonia and the pyruvoyl prosthetic group on the alpha chain. During this reaction, the Ser that is part of the protease active site of the proenzyme becomes the pyruvoyl prosthetic group, which constitutes an essential element of the active site of the mature decarboxylase.

The protein localises to the cell membrane. The catalysed reaction is a 1,2-diacyl-sn-glycero-3-phospho-L-serine + H(+) = a 1,2-diacyl-sn-glycero-3-phosphoethanolamine + CO2. Its pathway is phospholipid metabolism; phosphatidylethanolamine biosynthesis; phosphatidylethanolamine from CDP-diacylglycerol: step 2/2. Its function is as follows. Catalyzes the formation of phosphatidylethanolamine (PtdEtn) from phosphatidylserine (PtdSer). The chain is Phosphatidylserine decarboxylase proenzyme from Escherichia coli (strain 55989 / EAEC).